The primary structure comprises 308 residues: Peroxisomal targeting signal 2 receptor (308 aa).

WD repeat units follow at residues 57–88 (DVEDSLFGVRWSQNCENQVYACCGDGSLRLFD), 101–132 (EHKAEIVAIDTNTVDRRIVVTGSWDGTIKLWL), 145–176 (GSNSRILTVATHYSSPNLLGYTSSDGLCKFWD), 187–218 (EIPNQITCMNWSKSNHRMVYTADNNNLVYCYD), 231–262 (GHQLAVRSIKSSNSAHDLLATASYDMTSRIFD), and 274–306 (LHSEFVRDVDWSDFGDGSWIASVGWDESLYIWN).

The protein belongs to the WD repeat peroxin-7 family. As to quaternary structure, interacts with PEX21.

The protein localises to the cytoplasm. It is found in the cytosol. Its subcellular location is the peroxisome matrix. In terms of biological role, receptor required for the peroxisomal import of proteins containing a C-terminal PTS2-type peroxisomal targeting signal, such as 3-oxoacyl-CoA thiolase. Specifically binds to cargo proteins containing a PTS2 peroxisomal targeting signal in the cytosol. Cargo protein-binding triggers interaction with PEX21 and formation of a ternary complex composed of PEX21 and PEX7 along with PTS2-containing cargo proteins, which is tranlocated into peroxisomes by passing through the PEX13-PEX14 docking complex. This is Peroxisomal targeting signal 2 receptor (pex7) from Schizosaccharomyces pombe (strain 972 / ATCC 24843) (Fission yeast).